We begin with the raw amino-acid sequence, 166 residues long: Small ribosomal subunit protein uS5 (166 aa).

Residues 12–75 (YIEKLVQVNR…EAARRNMIQV (64 aa)) form the S5 DRBM domain.

The protein belongs to the universal ribosomal protein uS5 family. In terms of assembly, part of the 30S ribosomal subunit. Contacts proteins S4 and S8.

Functionally, with S4 and S12 plays an important role in translational accuracy. In terms of biological role, located at the back of the 30S subunit body where it stabilizes the conformation of the head with respect to the body. The protein is Small ribosomal subunit protein uS5 of Pseudomonas aeruginosa (strain LESB58).